The sequence spans 395 residues: Phosphoglycerate kinase (395 aa).

Substrate-binding positions include 21 to 23 (DLN), R36, 59 to 62 (HLGR), R114, and R147. Residues K198, E320, and 346–349 (GGDT) contribute to the ATP site.

The protein belongs to the phosphoglycerate kinase family. In terms of assembly, monomer.

Its subcellular location is the cytoplasm. It catalyses the reaction (2R)-3-phosphoglycerate + ATP = (2R)-3-phospho-glyceroyl phosphate + ADP. The protein operates within carbohydrate degradation; glycolysis; pyruvate from D-glyceraldehyde 3-phosphate: step 2/5. The sequence is that of Phosphoglycerate kinase from Nitrosospira multiformis (strain ATCC 25196 / NCIMB 11849 / C 71).